Consider the following 135-residue polypeptide: Probable transcription factor At2g20613 (135 aa).

A disordered region spans residues methionine 1–alanine 104. Residues aspartate 28–serine 41 are compositionally biased toward acidic residues. Positions lysine 62–glutamate 80 are enriched in basic and acidic residues.

This sequence belongs to the GeBP family.

This Arabidopsis thaliana (Mouse-ear cress) protein is Probable transcription factor At2g20613.